Reading from the N-terminus, the 346-residue chain is MVSSNFYKNLGPRKLTAIIDFLHDIIAPPKIHEDIAIHDIKILQEASPNDISFLSNPKYSEFLKTTKAAACIVPKNFTGEANPNTVLLHAQNPYFAYGKLIDFFYAPIKSYPAKIMKSAIVADSATIGKNCYIGHNVVIEDDVIIGDNSIIEAGSFIGRGVNIGRNARIEQHVSINYAIIGDDVVILAGAKIGQDGFGFSTEKGVHHKISHIGIVKIGNNVEIGANTTIDRGSLQDTIIKDLCRIDNLVQIGHGVKIGKGSIIVAQTGIAGSSTIGKYCTLGGQVGIAGHLNIGDGAQVAAQGGVAQNIEAGKIVGGSPAIPIMDWHRQSIIMKQLLKTSNSKLKK.

Residue histidine 253 is the Proton acceptor of the active site.

Belongs to the transferase hexapeptide repeat family. LpxD subfamily. As to quaternary structure, homotrimer.

The enzyme catalyses a UDP-3-O-[(3R)-3-hydroxyacyl]-alpha-D-glucosamine + a (3R)-hydroxyacyl-[ACP] = a UDP-2-N,3-O-bis[(3R)-3-hydroxyacyl]-alpha-D-glucosamine + holo-[ACP] + H(+). It participates in bacterial outer membrane biogenesis; LPS lipid A biosynthesis. In terms of biological role, catalyzes the N-acylation of UDP-3-O-acylglucosamine using 3-hydroxyacyl-ACP as the acyl donor. Is involved in the biosynthesis of lipid A, a phosphorylated glycolipid that anchors the lipopolysaccharide to the outer membrane of the cell. In Rickettsia conorii (strain ATCC VR-613 / Malish 7), this protein is UDP-3-O-acylglucosamine N-acyltransferase.